The chain runs to 155 residues: uncharacterized protein (155 aa).

4 consecutive transmembrane segments (helical) span residues 25-45 (LPMGFIGITLFEIGILLFGWT), 50-70 (IFWFVPTIGSAIMGGGYIMTS), 91-111 (GVKIFQLLLGAIFPLFAESLF), and 118-138 (WGCTLLAFILLACGCSLPILF).

It belongs to the major facilitator superfamily. CAR1 family.

Its subcellular location is the membrane. This is an uncharacterized protein from Schizosaccharomyces pombe (strain 972 / ATCC 24843) (Fission yeast).